The sequence spans 330 residues: Ketol-acid reductoisomerase (NADP(+)) (330 aa).

The 181-residue stretch at 1–181 folds into the KARI N-terminal Rossmann domain; it reads MKVFYDSDFK…GLSRAGVIQT (181 aa). NADP(+)-binding positions include 24–27, Arg47, Ser52, and 82–85; these read YGSQ and DELQ. His107 is a catalytic residue. Gly133 is an NADP(+) binding site. The 146-residue stretch at 182 to 327 folds into the KARI C-terminal knotted domain; the sequence is TFKEETETDL…AKLRKMCGLE (146 aa). Residues Asp190, Glu194, Glu226, and Glu230 each coordinate Mg(2+). Position 251 (Ser251) interacts with substrate.

This sequence belongs to the ketol-acid reductoisomerase family. Mg(2+) serves as cofactor.

The catalysed reaction is (2R)-2,3-dihydroxy-3-methylbutanoate + NADP(+) = (2S)-2-acetolactate + NADPH + H(+). It catalyses the reaction (2R,3R)-2,3-dihydroxy-3-methylpentanoate + NADP(+) = (S)-2-ethyl-2-hydroxy-3-oxobutanoate + NADPH + H(+). It participates in amino-acid biosynthesis; L-isoleucine biosynthesis; L-isoleucine from 2-oxobutanoate: step 2/4. The protein operates within amino-acid biosynthesis; L-valine biosynthesis; L-valine from pyruvate: step 2/4. Functionally, involved in the biosynthesis of branched-chain amino acids (BCAA). Catalyzes an alkyl-migration followed by a ketol-acid reduction of (S)-2-acetolactate (S2AL) to yield (R)-2,3-dihydroxy-isovalerate. In the isomerase reaction, S2AL is rearranged via a Mg-dependent methyl migration to produce 3-hydroxy-3-methyl-2-ketobutyrate (HMKB). In the reductase reaction, this 2-ketoacid undergoes a metal-dependent reduction by NADPH to yield (R)-2,3-dihydroxy-isovalerate. The protein is Ketol-acid reductoisomerase (NADP(+)) of Methanococcus maripaludis (strain C6 / ATCC BAA-1332).